Here is a 263-residue protein sequence, read N- to C-terminus: MKKVTIRDIMKKYKNGEKIVMVTAYDYPFAKLVDEAGVDMILVGDSLGMVVLGYPSTNQVTMKDMLHHVAAVARANPKAMIVGDMPFGSYEVSEEEAVRNAVELVRAGAEAVKLEGGKEVADKVEAIVKAGIPVMGHLGLTPQKRHALGGYRLRGKTEEEARELLEDAKALEEAGVFSIVLEFVKAEVAKKITEEVGVPTICIGAGPWCSGQVLVIHDILGLAPFSPPFAKKYFDCGKAIVEAVKKFAEEVRSGEFPGEGYYW.

Positions 45 and 84 each coordinate Mg(2+). 3-methyl-2-oxobutanoate contacts are provided by residues 45-46, D84, and K113; that span reads DS. E115 contributes to the Mg(2+) binding site. The Proton acceptor role is filled by E182.

It belongs to the PanB family. In terms of assembly, homodecamer; pentamer of dimers. The cofactor is Mg(2+).

The protein resides in the cytoplasm. The enzyme catalyses 3-methyl-2-oxobutanoate + (6R)-5,10-methylene-5,6,7,8-tetrahydrofolate + H2O = 2-dehydropantoate + (6S)-5,6,7,8-tetrahydrofolate. It functions in the pathway cofactor biosynthesis; coenzyme A biosynthesis. Catalyzes the reversible reaction in which hydroxymethyl group from 5,10-methylenetetrahydrofolate is transferred onto alpha-ketoisovalerate to form ketopantoate. In Ignicoccus hospitalis (strain KIN4/I / DSM 18386 / JCM 14125), this protein is 3-methyl-2-oxobutanoate hydroxymethyltransferase.